Reading from the N-terminus, the 359-residue chain is Very-long-chain (3R)-3-hydroxyacyl-CoA dehydratase (359 aa).

The Cytoplasmic segment spans residues Met1–Lys144. Positions Ala3–Thr92 constitute a CS domain. Positions Leu109 to Arg133 form a coiled coil. The helical transmembrane segment at Gly145–Met165 threads the bilayer. Over Thr166 to Asp186 the chain is Lumenal. The helical transmembrane segment at Val187 to Val207 threads the bilayer. The Cytoplasmic segment spans residues Lys208–Thr209. Residues Gly210 to Gly230 traverse the membrane as a helical segment. Over Ser231–Pro239 the chain is Lumenal. Residues Val240–Met260 traverse the membrane as a helical segment. Residues Leu261–Thr277 are Cytoplasmic-facing. The helical transmembrane segment at Ile278–Ile298 threads the bilayer. Active-site residues include Tyr283 and Glu290. Over Pro299–Leu317 the chain is Lumenal. A helical membrane pass occupies residues Ser318–Ile338. At Asn339 to Asn359 the chain is on the cytoplasmic side.

It belongs to the very long-chain fatty acids dehydratase HACD family.

Its subcellular location is the endoplasmic reticulum membrane. It carries out the reaction a very-long-chain (3R)-3-hydroxyacyl-CoA = a very-long-chain (2E)-enoyl-CoA + H2O. It catalyses the reaction (3R)-hydroxyhexadecanoyl-CoA = (2E)-hexadecenoyl-CoA + H2O. Its pathway is lipid metabolism; fatty acid biosynthesis. Its function is as follows. Catalyzes the third of the four reactions of the long-chain fatty acids elongation cycle. This endoplasmic reticulum-bound enzymatic process, allows the addition of two carbons to the chain of long- and very long-chain fatty acids/VLCFAs per cycle. This enzyme catalyzes the dehydration of the 3-hydroxyacyl-CoA intermediate into trans-2,3-enoyl-CoA, within each cycle of fatty acid elongation. Thereby, it participates in the production of VLCFAs of different chain lengths that are involved in multiple biological processes as precursors of membrane lipids and lipid mediators. Involved in Rac1-signaling pathways leading to the modulation of gene expression. The polypeptide is Very-long-chain (3R)-3-hydroxyacyl-CoA dehydratase (Danio rerio (Zebrafish)).